Here is a 20-residue protein sequence, read N- to C-terminus: 23 kDa cell wall protein (20 aa).

The protein resides in the secreted. The protein localises to the cell wall. The chain is 23 kDa cell wall protein from Solanum lycopersicum (Tomato).